The sequence spans 192 residues: uncharacterized protein (192 aa).

The Nudix hydrolase domain occupies 29–160 (QRQAAVLVPI…PLDIHRRGND (132 aa)). Positions 67–89 (GAVDNTDATLIAAALREAQEEVA) match the Nudix box motif. Mg(2+)-binding residues include glutamate 83 and glutamate 87.

Belongs to the Nudix hydrolase family. PCD1 subfamily. Mn(2+) is required as a cofactor. Requires Mg(2+) as cofactor.

Its function is as follows. Probably mediates the hydrolysis of some nucleoside diphosphate derivatives. This is an uncharacterized protein from Klebsiella pneumoniae (strain 342).